The sequence spans 324 residues: Biotin synthase (324 aa).

The Radical SAM core domain maps to 43–273 (FCGNYFNFCS…HVFLRLAGGR (231 aa)). [4Fe-4S] cluster-binding residues include cysteine 61, cysteine 65, and cysteine 68. Serine 105, cysteine 138, cysteine 198, and arginine 268 together coordinate [2Fe-2S] cluster.

It belongs to the radical SAM superfamily. Biotin synthase family. In terms of assembly, homodimer. [4Fe-4S] cluster is required as a cofactor. Requires [2Fe-2S] cluster as cofactor.

It carries out the reaction (4R,5S)-dethiobiotin + (sulfur carrier)-SH + 2 reduced [2Fe-2S]-[ferredoxin] + 2 S-adenosyl-L-methionine = (sulfur carrier)-H + biotin + 2 5'-deoxyadenosine + 2 L-methionine + 2 oxidized [2Fe-2S]-[ferredoxin]. The protein operates within cofactor biosynthesis; biotin biosynthesis; biotin from 7,8-diaminononanoate: step 2/2. Catalyzes the conversion of dethiobiotin (DTB) to biotin by the insertion of a sulfur atom into dethiobiotin via a radical-based mechanism. This Campylobacter hominis (strain ATCC BAA-381 / DSM 21671 / CCUG 45161 / LMG 19568 / NCTC 13146 / CH001A) protein is Biotin synthase.